We begin with the raw amino-acid sequence, 480 residues long: 11S globulin subunit beta (480 aa).

The first 21 residues, 1-21, serve as a signal peptide directing secretion; sequence MARSSLFTFLCLAVFINGCLS. Q22 is modified (pyrrolidone carboxylic acid). Intrachain disulfides connect C48-C81 and C124-C303. Cupin type-1 domains are found at residues 51 to 251 and 309 to 458; these read ENLR…GLVR and QNIG…EEAQ. Positions 408 and 468 each coordinate Mg(2+).

Belongs to the 11S seed storage protein (globulins) family. Hexamer; each subunit is composed of an acidic and a basic chain derived from a single precursor and linked by a disulfide bond.

This is a seed storage protein. The sequence is that of 11S globulin subunit beta from Cucurbita maxima (Pumpkin).